Reading from the N-terminus, the 459-residue chain is Phosphoglucosamine mutase (459 aa).

S102 (phosphoserine intermediate) is an active-site residue. S102, D243, D245, and D247 together coordinate Mg(2+). S102 is modified (phosphoserine).

The protein belongs to the phosphohexose mutase family. Requires Mg(2+) as cofactor. Post-translationally, activated by phosphorylation.

It carries out the reaction alpha-D-glucosamine 1-phosphate = D-glucosamine 6-phosphate. Functionally, catalyzes the conversion of glucosamine-6-phosphate to glucosamine-1-phosphate. This chain is Phosphoglucosamine mutase, found in Bartonella quintana (strain Toulouse) (Rochalimaea quintana).